A 111-amino-acid polypeptide reads, in one-letter code: Colicin-Ia immunity protein (111 aa).

A run of 2 helical transmembrane segments spans residues 33 to 53 (LLFWCISLCGMVLYPVAKWYI) and 85 to 105 (TGTVFILSLPLSMIYILSVII).

The protein localises to the cell membrane. Its function is as follows. This protein is able to protect a cell, which harbors the plasmid ColIa-CA53 encoding colicin Ia, against colicin Ia. The polypeptide is Colicin-Ia immunity protein (Escherichia coli).